A 284-amino-acid polypeptide reads, in one-letter code: RNase adapter protein RapZ (284 aa).

Residue 8–15 (GRSGSGKS) coordinates ATP. 56–59 (DVRN) provides a ligand contact to GTP. Residues 266–284 (RARGKNVQSRHRTLEKRKQ) form an RNA-binding region.

It belongs to the RapZ-like family. RapZ subfamily. As to quaternary structure, homotrimer.

Functionally, modulates the synthesis of GlmS, by affecting the processing and stability of the regulatory small RNA GlmZ. When glucosamine-6-phosphate (GlcN6P) concentrations are high in the cell, RapZ binds GlmZ and targets it to cleavage by RNase E. Consequently, GlmZ is inactivated and unable to activate GlmS synthesis. Under low GlcN6P concentrations, RapZ is sequestered and inactivated by an other regulatory small RNA, GlmY, preventing GlmZ degradation and leading to synthesis of GlmS. The protein is RNase adapter protein RapZ of Yersinia pseudotuberculosis serotype O:1b (strain IP 31758).